A 764-amino-acid polypeptide reads, in one-letter code: 5-methyltetrahydropteroyltriglutamate--homocysteine methyltransferase (764 aa).

5-methyltetrahydropteroyltri-L-glutamate contacts are provided by residues 16–19 (RELK) and Lys-115. L-homocysteine is bound by residues 435–437 (IGS) and Glu-488. L-methionine contacts are provided by residues 435 to 437 (IGS) and Glu-488. 5-methyltetrahydropteroyltri-L-glutamate is bound by residues 519 to 520 (RC) and Trp-565. Asp-603 contributes to the L-homocysteine binding site. An L-methionine-binding site is contributed by Asp-603. Glu-609 contributes to the 5-methyltetrahydropteroyltri-L-glutamate binding site. Zn(2+) is bound by residues His-645, Cys-647, and Glu-669. Catalysis depends on His-698, which acts as the Proton donor. Cys-730 contributes to the Zn(2+) binding site.

It belongs to the vitamin-B12 independent methionine synthase family. The cofactor is Zn(2+).

The catalysed reaction is 5-methyltetrahydropteroyltri-L-glutamate + L-homocysteine = tetrahydropteroyltri-L-glutamate + L-methionine. The protein operates within amino-acid biosynthesis; L-methionine biosynthesis via de novo pathway; L-methionine from L-homocysteine (MetE route): step 1/1. Catalyzes the transfer of a methyl group from 5-methyltetrahydrofolate to homocysteine resulting in methionine formation. The sequence is that of 5-methyltetrahydropteroyltriglutamate--homocysteine methyltransferase from Burkholderia mallei (strain NCTC 10247).